A 665-amino-acid polypeptide reads, in one-letter code: UvrABC system protein B (665 aa).

Residues 31 to 414 (DGVKGGEKAQ…EMEQTETVVQ (384 aa)) form the Helicase ATP-binding domain. 44-51 (GATGTGKT) contacts ATP. Positions 97–120 (YYDYYQPEAYVPSSDTYIEKDSSI) match the Beta-hairpin motif. A Helicase C-terminal domain is found at 435–601 (QIDDLVGEIH…TIIKEIRDLI (167 aa)). One can recognise a UVR domain in the interval 629 to 664 (ADLLMKLEREMKDAAKALDFETAATLRDTILELKAA).

It belongs to the UvrB family. In terms of assembly, forms a heterotetramer with UvrA during the search for lesions. Interacts with UvrC in an incision complex.

It localises to the cytoplasm. The UvrABC repair system catalyzes the recognition and processing of DNA lesions. A damage recognition complex composed of 2 UvrA and 2 UvrB subunits scans DNA for abnormalities. Upon binding of the UvrA(2)B(2) complex to a putative damaged site, the DNA wraps around one UvrB monomer. DNA wrap is dependent on ATP binding by UvrB and probably causes local melting of the DNA helix, facilitating insertion of UvrB beta-hairpin between the DNA strands. Then UvrB probes one DNA strand for the presence of a lesion. If a lesion is found the UvrA subunits dissociate and the UvrB-DNA preincision complex is formed. This complex is subsequently bound by UvrC and the second UvrB is released. If no lesion is found, the DNA wraps around the other UvrB subunit that will check the other stand for damage. In Enterococcus faecalis (strain ATCC 700802 / V583), this protein is UvrABC system protein B.